Consider the following 416-residue polypeptide: MTQQHPLVRLVNSTSLVSQILVGLVFGILLAMFMPEWAKTAGLLGSLFVGALKAVAPLLVFVLVMAAIIGHKQGQKTNMKPILLLYLLGTFLAAAVAVVASFLFPSNLHLVANSAEITPPGGITEVLQTLLFNVVTNPVKALLDANYIGILAWAIGLGIAMRHASEGTKAVITDLSHGVSTIVKAVIRCAPLGILGLVASTLAETGFDALFGYAQLLVVLIGCMLFIAFVVNPLIVFWKIKRNPYPLVLTCLKESGVTAFFTRSSAANIPVNMALAEKLRLPEDTYAVSIPLGATINMAGAAITITVLSMAAVHTLGMEVDLATAILLSVVATISACGASGVAGGSLLLIPLACSLFGISNDIAMQVVAVGFIIGVLQDSAETALNSSTDVLFTAAACMAEDETLLDAAPVPNSEA.

The next 9 membrane-spanning stretches (helical) occupy residues 15 to 35 (SLVS…MFMP), 49 to 69 (VGAL…AAII), 82 to 102 (ILLL…VASF), 141 to 161 (ALLD…GIAM), 192 to 212 (LGIL…ALFG), 217 to 237 (LVVL…LIVF), 288 to 308 (VSIP…ITVL), 316 to 336 (LGME…TISA), and 363 to 383 (IAMQ…SAET).

Belongs to the dicarboxylate/amino acid:cation symporter (DAACS) (TC 2.A.23) family.

Its subcellular location is the cell inner membrane. The enzyme catalyses L-serine(in) + Na(+)(in) = L-serine(out) + Na(+)(out). It catalyses the reaction L-threonine(in) + Na(+)(in) = L-threonine(out) + Na(+)(out). Its function is as follows. Involved in the import of serine and threonine into the cell, with the concomitant import of sodium (symport system). The polypeptide is Serine/threonine transporter SstT (Aeromonas hydrophila subsp. hydrophila (strain ATCC 7966 / DSM 30187 / BCRC 13018 / CCUG 14551 / JCM 1027 / KCTC 2358 / NCIMB 9240 / NCTC 8049)).